A 404-amino-acid polypeptide reads, in one-letter code: Cysteine desulfurase IscS (404 aa).

Pyridoxal 5'-phosphate-binding positions include 75 to 76 (AT), Asn-155, Gln-183, and 203 to 205 (SAH). Lys-206 bears the N6-(pyridoxal phosphate)lysine mark. Residue Thr-243 participates in pyridoxal 5'-phosphate binding. Cys-328 functions as the Cysteine persulfide intermediate in the catalytic mechanism. Cys-328 is a [2Fe-2S] cluster binding site.

It belongs to the class-V pyridoxal-phosphate-dependent aminotransferase family. NifS/IscS subfamily. As to quaternary structure, homodimer. Forms a heterotetramer with IscU, interacts with other sulfur acceptors. Pyridoxal 5'-phosphate serves as cofactor.

It localises to the cytoplasm. The enzyme catalyses (sulfur carrier)-H + L-cysteine = (sulfur carrier)-SH + L-alanine. The protein operates within cofactor biosynthesis; iron-sulfur cluster biosynthesis. Functionally, master enzyme that delivers sulfur to a number of partners involved in Fe-S cluster assembly, tRNA modification or cofactor biosynthesis. Catalyzes the removal of elemental sulfur atoms from cysteine to produce alanine. Functions as a sulfur delivery protein for Fe-S cluster synthesis onto IscU, an Fe-S scaffold assembly protein, as well as other S acceptor proteins. The polypeptide is Cysteine desulfurase IscS (Vibrio cholerae serotype O1 (strain M66-2)).